A 115-amino-acid polypeptide reads, in one-letter code: Replication initiation control protein YabA (115 aa).

4 residues coordinate Zn(2+): His-90, Cys-92, Cys-106, and Cys-109.

This sequence belongs to the YabA family. In terms of assembly, homotetramer. Interacts with both DnaA and DnaN, acting as a bridge between these two proteins. Zn(2+) is required as a cofactor.

It is found in the cytoplasm. The protein localises to the nucleoid. In terms of biological role, involved in control of chromosome replication initiation. Inhibits the cooperative binding of DnaA to the oriC region, thus negatively regulating initiation of chromosome replication. Inhibits the ability of DnaA-ATP to form a helix on DNA; does not disassemble preformed DnaA-DNA helices. Decreases the residence time of DnaA on the chromosome at its binding sites (oriC, replication forks and promoter-binding sites). Tethers DnaA to the replication machinery via the DNA polymerase beta sliding clamp subunit (dnaN). Associates with oriC and other DnaA targets on the chromosome in a DnaA-dependent manner. In Staphylococcus epidermidis (strain ATCC 35984 / DSM 28319 / BCRC 17069 / CCUG 31568 / BM 3577 / RP62A), this protein is Replication initiation control protein YabA.